The chain runs to 305 residues: Sulfate adenylyltransferase subunit 2 (305 aa).

It belongs to the PAPS reductase family. CysD subfamily. As to quaternary structure, heterodimer composed of CysD, the smaller subunit, and CysN.

It catalyses the reaction sulfate + ATP + H(+) = adenosine 5'-phosphosulfate + diphosphate. It participates in sulfur metabolism; hydrogen sulfide biosynthesis; sulfite from sulfate: step 1/3. In terms of biological role, with CysN forms the ATP sulfurylase (ATPS) that catalyzes the adenylation of sulfate producing adenosine 5'-phosphosulfate (APS) and diphosphate, the first enzymatic step in sulfur assimilation pathway. APS synthesis involves the formation of a high-energy phosphoric-sulfuric acid anhydride bond driven by GTP hydrolysis by CysN coupled to ATP hydrolysis by CysD. The protein is Sulfate adenylyltransferase subunit 2 of Pseudomonas syringae pv. tomato (strain ATCC BAA-871 / DC3000).